The chain runs to 317 residues: 2,3-dihydroxyphenylpropionate/2,3-dihydroxicinnamic acid 1,2-dioxygenase (317 aa).

His115 functions as the Proton donor in the catalytic mechanism. His179 (proton acceptor) is an active-site residue.

It belongs to the LigB/MhpB extradiol dioxygenase family. In terms of assembly, homotetramer. Requires Fe(2+) as cofactor.

It carries out the reaction 3-(2,3-dihydroxyphenyl)propanoate + O2 = (2Z,4E)-2-hydroxy-6-oxonona-2,4-dienedioate + H(+). It catalyses the reaction (2E)-3-(2,3-dihydroxyphenyl)prop-2-enoate + O2 = (2Z,4E,7E)-2-hydroxy-6-oxonona-2,4,7-trienedioate + H(+). It participates in aromatic compound metabolism; 3-phenylpropanoate degradation. Catalyzes the non-heme iron(II)-dependent oxidative cleavage of 2,3-dihydroxyphenylpropionic acid and 2,3-dihydroxicinnamic acid into 2-hydroxy-6-ketononadienedioate and 2-hydroxy-6-ketononatrienedioate, respectively. The chain is 2,3-dihydroxyphenylpropionate/2,3-dihydroxicinnamic acid 1,2-dioxygenase from Photorhabdus laumondii subsp. laumondii (strain DSM 15139 / CIP 105565 / TT01) (Photorhabdus luminescens subsp. laumondii).